A 588-amino-acid polypeptide reads, in one-letter code: Cyclomaltodextrinase (588 aa).

H247 and R326 together coordinate substrate. The Nucleophile role is filled by D328. The active-site Proton donor is the E357. Substrate contacts are provided by residues 423–424 (HD), D468, and R472.

It belongs to the glycosyl hydrolase 13 family. In terms of assembly, exists as a monomer or a homodimer in solution. Homodimer is more active and stable than the monomer.

It carries out the reaction cyclomaltodextrin + H2O = linear maltodextrin. No metal dependence, but Mn(2+) increases the activity with alpha-cyclodextrin as substrate. No effect on the activity with presence or absence of Ca(2+), Zn(2+), Tween-20 or EDTA. Its function is as follows. Hydrolyzes alpha-, beta- and gamma-cyclodextrins with the highest activity with alpha-cyclodextrin (cyclomaltohexaose). Pullulan is the preferred substrate from linear substrates. Maltose is a major product of these reactions. Is also able to hydrolyze maltotriose and acarbose, and transglycosylate their hydrolytic products. Major reaction products of maltotriose and of acarbose are maltose and glucose, and glucose and pseudotrisaccharide, respectively. No activity with glucose or maltose as substrate. This is Cyclomaltodextrinase from Geobacillus thermopakistaniensis (strain MAS1).